A 155-amino-acid polypeptide reads, in one-letter code: Endoribonuclease YbeY (155 aa).

H118, H122, and H128 together coordinate Zn(2+).

Belongs to the endoribonuclease YbeY family. Zn(2+) serves as cofactor.

It localises to the cytoplasm. Single strand-specific metallo-endoribonuclease involved in late-stage 70S ribosome quality control and in maturation of the 3' terminus of the 16S rRNA. The chain is Endoribonuclease YbeY from Bordetella petrii (strain ATCC BAA-461 / DSM 12804 / CCUG 43448).